A 172-amino-acid polypeptide reads, in one-letter code: NADH-quinone oxidoreductase subunit B (172 aa).

4 residues coordinate [4Fe-4S] cluster: Cys-46, Cys-47, Cys-111, and Cys-141.

The protein belongs to the complex I 20 kDa subunit family. As to quaternary structure, NDH-1 is composed of 14 different subunits. Subunits NuoB, C, D, E, F, and G constitute the peripheral sector of the complex. The cofactor is [4Fe-4S] cluster.

It is found in the cell membrane. The enzyme catalyses a quinone + NADH + 5 H(+)(in) = a quinol + NAD(+) + 4 H(+)(out). Its function is as follows. NDH-1 shuttles electrons from NADH, via FMN and iron-sulfur (Fe-S) centers, to quinones in the respiratory chain. The immediate electron acceptor for the enzyme in this species is believed to be a menaquinone. Couples the redox reaction to proton translocation (for every two electrons transferred, four hydrogen ions are translocated across the cytoplasmic membrane), and thus conserves the redox energy in a proton gradient. In Bacillus cytotoxicus (strain DSM 22905 / CIP 110041 / 391-98 / NVH 391-98), this protein is NADH-quinone oxidoreductase subunit B.